Reading from the N-terminus, the 127-residue chain is uncharacterized protein (127 aa).

Disordered stretches follow at residues 1–22 (MLPAGCWNDTSRDGPGFRKMKG) and 53–106 (LVGK…PGPK). The segment covering 76 to 95 (PNGEAHAEQARRKISVEEKQ) has biased composition (basic and acidic residues).

Its subcellular location is the mitochondrion. This is an uncharacterized protein from Arabidopsis thaliana (Mouse-ear cress).